We begin with the raw amino-acid sequence, 339 residues long: MRLLDGGSFTAESSREVVQANCVHWRKKFSFMCKMSASASTGILDPCIYRVSVRKELKGGKAYAKLGFADLNLAEFAGSGNTTRRCLLEGYDTKNTRQDNSILKVLISMQLMSGDPCFKTPPSTSMSIPIAGESESLEEDRKGGETLKVHLGIADLSAKSASVPDELGAWGHSRTSSYASQQSKVSGYSTCHSRSSSFSEFCHRRNTSVGSTSTGIESILEPCDETEPITAEPSPDPTAAAATATTTTAKEEEASEKLARCPVKQDSVESQLKRVDDTRVDADDIVEKILQSQDFSLDSSAEEEGLRLFVGPGGSTTFGSHHLPNRVGSGAYEQVVIKR.

The C2 NT-type domain occupies 1-111; the sequence is MRLLDGGSFT…ILKVLISMQL (111 aa). Ser197 is subject to Phosphoserine. The disordered stretch occupies residues 226–262; sequence TEPITAEPSPDPTAAAATATTTTAKEEEASEKLARCP. A compositionally biased stretch (low complexity) spans 230–248; sequence TAEPSPDPTAAAATATTTT. Basic and acidic residues predominate over residues 249–259; it reads AKEEEASEKLA. Phosphoserine occurs at positions 255, 267, 299, 300, and 329.

This sequence belongs to the EEIG family. As to expression, expressed in bone marrow-derived macrophages.

The polypeptide is EEIG family member 2 (Eeig2) (Mus musculus (Mouse)).